We begin with the raw amino-acid sequence, 614 residues long: High-affinity choline transporter 1 (614 aa).

A helical membrane pass occupies residues 6–26 (GVVSIVLFYLLILVVGIWAGR). Residues 27 to 44 (KKQSGNDSEEEVMLAGRS) are Cytoplasmic-facing. The chain crosses the membrane as a helical span at residues 45–65 (IGLFVGIFTMTATWVGGGYIN). Residues 66 to 75 (GTAEAIYTSG) lie on the Extracellular side of the membrane. A helical membrane pass occupies residues 76–96 (LVWCQAPFGYALSLVFGGIFF). Residues 97–119 (ANPMRKQGYITMLDPLQDSFGER) are Cytoplasmic-facing. A helical membrane pass occupies residues 120-140 (MGGLLFLPALCGEVFWAAGIL). The Extracellular portion of the chain corresponds to 141-158 (AALGATLSVIIDMDHRTS). A helical membrane pass occupies residues 159 to 179 (VILSSCIAIFYTLFGGLYSVA). Topologically, residues 180–185 (YTDVIQ) are cytoplasmic. Residues 186–206 (LFCIFIGLWMCIPFAWSNEHV) form a helical membrane-spanning segment. The Extracellular portion of the chain corresponds to 207-225 (GSLSDLEVDWIGHVEPKKH). Residues 226–246 (WLYIDYGLLLVFGGIPWQVYF) traverse the membrane as a helical segment. The Cytoplasmic segment spans residues 247–262 (QRVLSSKTAGRAQLLS). The helical transmembrane segment at 263 to 283 (YVAAAGCILMAIPPVLIGAIA) threads the bilayer. Over 284–305 (KATPWNETDYKGPYPLTVDETS) the chain is Extracellular. Asn-289 is a glycosylation site (N-linked (GlcNAc...) asparagine). A helical membrane pass occupies residues 306–326 (MILPMVLQYLTPDFVSFFGLG). Over 327-364 (AVSAAVMSSADSSVLSAASMFARNVYKLIFRQKASEME) the chain is Cytoplasmic. Residues 365–385 (IIWVMRVAIIVVGILATIMAL) form a helical membrane-spanning segment. The Extracellular portion of the chain corresponds to 386 to 394 (TIPSIYGLW). A helical transmembrane segment spans residues 395-415 (SMCSDLVYVILFPQLLMVVHF). The Cytoplasmic segment spans residues 416–424 (KKHCNTYGS). The helical transmembrane segment at 425–445 (LSAYIVALAIRLSGGEAILGL) threads the bilayer. The Extracellular portion of the chain corresponds to 446–467 (APLIKYPGYDEETKEQMFPFRT). A helical membrane pass occupies residues 468–488 (MAMLLSLVTLISVSWWTKMMF). Topologically, residues 489–614 (ESGKLPPSYD…PTAEQDNTAF (126 aa)) are cytoplasmic. Positions 583 to 614 (ATGVKPSGGGGGHLQSQSGMAMPTAEQDNTAF) are disordered.

This sequence belongs to the sodium:solute symporter (SSF) (TC 2.A.21) family.

Its subcellular location is the membrane. Functionally, imports choline from the extracellular space to the neuron with high affinity. Rate-limiting step in acetylcholine synthesis. Sodium ion and chloride ion dependent. This chain is High-affinity choline transporter 1, found in Drosophila melanogaster (Fruit fly).